We begin with the raw amino-acid sequence, 612 residues long: MSQFNAKAFLADVPHLPGVYRMYDANQAIIYVGKAKDLKKRLASYFRSQVASKKIEALVGNIHHIDTTITHSETEALLLEHNYIKQHQPKYNVLLRDDKSYPYLLLTKHQHPRLTAFRGSKKVAGEYFGPYPNVSAVRESLNLLQKIFPIRQCEDNYYKNRSRPCLQHQIGRCLAPCVTGYCSQQEYDNQVKWVRLFLQGKDSQVIDYLMQKMEIAASELDFETAARFRDQIQSVRAVQEKQFVANQRLDDLDIISIAYQSGLACAHILFIRQGKVLGNRAYFPKVPSHTDLTELADTFIGQFYLQLNQHRSIPNQIILDQPLTESNALAQLLTEQAGHKVTIITNHVRGDKSRYLALAQTNARAALSLQLKQSTTIHKRYDALKILLKLPTIKRMECFDISHTMGSQTVASCVVFDENGPLKSDYRRFNIEGITGGDDYAGMEQALVKRYDKPLPIEKIPDIIFIDGGKGQLNRALQVFEKLTVAWDKHKPLLIGVAKGAERKAGLETLIIGRLKKEIHLPIDSPALHLIQHIRDESHHHAISGHRKKRQKAFVESGLESIAGVGAKRRQALLKYLGGMQGVKSATLAEIESVPGISKTLAGVIFDTLHNS.

The 79-residue stretch at 15–93 (HLPGVYRMYD…IKQHQPKYNV (79 aa)) folds into the GIY-YIG domain. Residues 203 to 238 (SQVIDYLMQKMEIAASELDFETAARFRDQIQSVRAV) form the UVR domain.

It belongs to the UvrC family. Interacts with UvrB in an incision complex.

The protein localises to the cytoplasm. In terms of biological role, the UvrABC repair system catalyzes the recognition and processing of DNA lesions. UvrC both incises the 5' and 3' sides of the lesion. The N-terminal half is responsible for the 3' incision and the C-terminal half is responsible for the 5' incision. The protein is UvrABC system protein C of Haemophilus ducreyi (strain 35000HP / ATCC 700724).